The following is a 777-amino-acid chain: Serine/threonine-protein kinase PLK4 (777 aa).

Residues 14-268 (YEVQHLLGKG…LEQVLRHPFL (255 aa)) form the Protein kinase domain. ATP-binding positions include 20-28 (LGKGGFASV) and Lys-43. The Proton acceptor role is filled by Asp-139. Residues 371–381 (TNNLAPFTSDS) are compositionally biased toward polar residues. Residues 371–390 (TNNLAPFTSDSDMIPSPVGE) are disordered. The 118-residue stretch at 390–507 (EKRLLMPPLE…ARFVGLVKSK (118 aa)) folds into the Cryptic POLO box 1 (CPB1) domain. The Cryptic POLO box 2 (CPB2) domain occupies 508–611 (TPKITFFSSL…GRRPAADMHA (104 aa)). The POLO box domain maps to 669–748 (PIKRITVPEI…MPQLQMKLKC (80 aa)).

It belongs to the protein kinase superfamily. Ser/Thr protein kinase family. CDC5/Polo subfamily. Homodimer. Ubiquitinated by the SCF(Slimb) ubiquitin ligase complex; leading to its degradation by the proteasome during interphase and regulating centriole number and ensuring the block to centriole reduplication.

It localises to the cytoplasm. Its subcellular location is the cytoskeleton. The protein localises to the microtubule organizing center. It is found in the centrosome. The protein resides in the centriole. The catalysed reaction is L-seryl-[protein] + ATP = O-phospho-L-seryl-[protein] + ADP + H(+). It carries out the reaction L-threonyl-[protein] + ATP = O-phospho-L-threonyl-[protein] + ADP + H(+). Functionally, serine/threonine-protein kinase that plays a central role in centriole duplication. Able to trigger procentriole formation on the surface of the mother centriole cylinder, using mother centriole as a platform, leading to the recruitment of centriole biogenesis proteins such as sas-6. When overexpressed, it is able to induce centrosome amplification through the simultaneous generation of multiple procentrioles adjoining each parental centriole during S phase. Centrosome amplification following overexpression can initiate tumorigenesis, highlighting the importance of centrosome regulation in cancers. In Drosophila pseudoobscura pseudoobscura (Fruit fly), this protein is Serine/threonine-protein kinase PLK4 (SAK).